Reading from the N-terminus, the 528-residue chain is 4-chlorobenzoate--CoA ligase (528 aa).

Residues 161–169, 300–305, and Asn409 each bind ATP; these read TSGTTGLPK and NIYGTT.

This sequence belongs to the ATP-dependent AMP-binding enzyme family. Homodimer. It depends on Mg(2+) as a cofactor.

The catalysed reaction is 4-chlorobenzoate + ATP + CoA = 4-chlorobenzoyl-CoA + AMP + diphosphate. Its pathway is xenobiotic degradation; 4-chlorobenzoate degradation; 4-hydroxybenzoate from 4-chlorobenzoate: step 2/3. Its activity is regulated as follows. Unaffected by 5,5'-dithiobis-(2-nitrobenzoic acid), 4-chloromercuribenzoate and sodium azide. Inhibited by Cu(2+), Fe(2+) and Zn(2+). Unaffected by Na(+), K(+) and Li(+). Catalyzes the formation of chlorobenzoyl-CoA via a 2 step reaction. First 4-chlorobenzoyl is adenylated by ATP, followed by acyl transfer from the 4-chlorobenzoyl-AMP intermediate to CoA. Benzoate, 4-bromobenzoate, 4-iodobenzoate and 4-methylbenzoate also act as substrates. Inactive towards 4-aminobenzoate, 4-hydroxybenzoate, 2-aminobenzoate, 2,3-dihydroxybenzoate, 4-coumarate and the aliphatic carboxylic acids palmate, caproate, laurate and butyrate. Negligible activity is detected when ATP is replaced by UTP, CTP or GTP as cosubstrate. The polypeptide is 4-chlorobenzoate--CoA ligase (Pseudomonas sp. (strain CBS-3)).